Here is a 219-residue protein sequence, read N- to C-terminus: Elongation factor Ts (219 aa).

Positions 82–85 are involved in Mg(2+) ion dislocation from EF-Tu; that stretch reads TDFV.

It belongs to the EF-Ts family.

The protein localises to the cytoplasm. In terms of biological role, associates with the EF-Tu.GDP complex and induces the exchange of GDP to GTP. It remains bound to the aminoacyl-tRNA.EF-Tu.GTP complex up to the GTP hydrolysis stage on the ribosome. The chain is Elongation factor Ts from Anaeromyxobacter dehalogenans (strain 2CP-C).